The primary structure comprises 645 residues: Sodium/potassium/calcium exchanger 3 (645 aa).

Positions 1–43 are cleaved as a signal peptide; that stretch reads MPPPGDQDCARRRSRRRRRDLLLSQLCFLASVALLLWSLSSLR. The Extracellular segment spans residues 44 to 106; sequence EQKELDLMDL…DIFSNEDRRQ (63 aa). N-linked (GlcNAc...) asparagine glycosylation is found at Asn-70 and Asn-85. A helical transmembrane segment spans residues 107 to 127; that stretch reads GAVVLHVLCAMYMFYALAIVC. Over 128–151 the chain is Cytoplasmic; the sequence is DDFFVPSLEKICERLHLSEDVAGA. An Alpha-1 repeat occupies 148 to 188; sequence VAGATFMAAGSSAPELFTSVIGVFITKGDVGVGTIVGSAVF. Residues 152–172 form a helical membrane-spanning segment; it reads TFMAAGSSAPELFTSVIGVFI. At 173 to 181 the chain is on the extracellular side; it reads TKGDVGVGT. A helical transmembrane segment spans residues 182 to 202; sequence IVGSAVFNILCIIGVCGLFAG. Residues 203–209 lie on the Cytoplasmic side of the membrane; it reads QVVALSS. The chain crosses the membrane as a helical span at residues 210–230; sequence WCLLRDSIYYTLSVVALIVFI. The Extracellular segment spans residues 231–234; it reads YDEK. Residues 235-255 traverse the membrane as a helical segment; sequence VSWWESLVLVLMYLIYIVIMK. Residues 256–486 are Cytoplasmic-facing; the sequence is YNACIHQCFE…WFMVTFASST (231 aa). The residue at position 307 (Ser-307) is a Phosphoserine. Disordered regions lie at residues 379–398 and 404–442; these read TVEN…NGTR and AETD…PFDP. Residues 404-435 are compositionally biased toward acidic residues; sequence AETDNETENENEDNENNENDEEEEEDEDDDEG. The helical transmembrane segment at 487-507 threads the bilayer; it reads LWIAAFSYMMVWMVTIIGYTL. Over 508–512 the chain is Extracellular; sequence GIPDV. A helical transmembrane segment spans residues 513–533; the sequence is IMGITFLAAGTSVPDCMASLI. One copy of the Alpha-2 repeat lies at 520–551; sequence AAGTSVPDCMASLIVARQGMGDMAVSNSIGSN. At 534 to 551 the chain is on the cytoplasmic side; the sequence is VARQGMGDMAVSNSIGSN. Residues 552 to 572 form a helical membrane-spanning segment; it reads VFDILIGLGLPWALQTLAVDY. Topologically, residues 573 to 582 are extracellular; that stretch reads GSYIRLNSRG. A helical membrane pass occupies residues 583–603; the sequence is LIYSVGLLLASVFVTVFGVHL. Residues 604-617 are Cytoplasmic-facing; that stretch reads NKWQLDKKLGCGCL. The chain crosses the membrane as a helical span at residues 618–638; that stretch reads FLYGVFLCFSIMTEFNVFTFV. Residues 639–645 are Extracellular-facing; that stretch reads NLPMCGD.

The protein belongs to the Ca(2+):cation antiporter (CaCA) (TC 2.A.19) family. SLC24A subfamily. As to expression, abundant in the brain. Highest levels found in selected thalamic nuclei, hippocampal CA1 neurons and in layer IV of the cerebral cortex. Expressed in dental tissues.

It localises to the cell membrane. It carries out the reaction Ca(2+)(out) + K(+)(out) + 4 Na(+)(in) = Ca(2+)(in) + K(+)(in) + 4 Na(+)(out). Calcium, potassium:sodium antiporter that transports 1 Ca(2+) and 1 K(+) in exchange for 4 Na(+). This Mus musculus (Mouse) protein is Sodium/potassium/calcium exchanger 3 (Slc24a3).